Consider the following 60-residue polypeptide: Large ribosomal subunit protein uL30 (60 aa).

This sequence belongs to the universal ribosomal protein uL30 family. Part of the 50S ribosomal subunit.

This is Large ribosomal subunit protein uL30 from Carboxydothermus hydrogenoformans (strain ATCC BAA-161 / DSM 6008 / Z-2901).